A 461-amino-acid chain; its full sequence is Tubulin gamma-2 chain (461 aa).

142-148 (AGGTGSG) is a binding site for GTP.

It belongs to the tubulin family.

It localises to the cytoplasm. It is found in the cytoskeleton. Its subcellular location is the microtubule organizing center. The protein localises to the centrosome. In terms of biological role, tubulin is the major constituent of microtubules. The gamma chain is found at microtubule organizing centers (MTOC) such as the spindle poles or the centrosome, suggesting that it is involved in the minus-end nucleation of microtubule assembly. In Euplotoides octocarinatus (Freshwater ciliate), this protein is Tubulin gamma-2 chain.